The following is a 291-amino-acid chain: 3-hydroxy-5-phosphonooxypentane-2,4-dione thiolase (291 aa).

Catalysis depends on Lys-203, which acts as the Schiff-base intermediate with substrate.

Belongs to the DeoC/FbaB aldolase family. As to quaternary structure, homodecamer.

It localises to the cytoplasm. The catalysed reaction is dihydroxyacetone phosphate + acetyl-CoA = 3-hydroxy-2,4-dioxopentyl phosphate + CoA. Functionally, involved in the degradation of phospho-AI-2, thereby terminating induction of the lsr operon and closing the AI-2 signaling cycle. Catalyzes the transfer of an acetyl moiety from 3-hydroxy-5-phosphonooxypentane-2,4-dione to CoA to form glycerone phosphate and acetyl-CoA. This chain is 3-hydroxy-5-phosphonooxypentane-2,4-dione thiolase, found in Yersinia pseudotuberculosis serotype O:1b (strain IP 31758).